We begin with the raw amino-acid sequence, 242 residues long: Demethylmenaquinone methyltransferase (242 aa).

S-adenosyl-L-methionine is bound by residues threonine 74 and aspartate 93.

It belongs to the class I-like SAM-binding methyltransferase superfamily. MenG/UbiE family.

The catalysed reaction is a 2-demethylmenaquinol + S-adenosyl-L-methionine = a menaquinol + S-adenosyl-L-homocysteine + H(+). It functions in the pathway quinol/quinone metabolism; menaquinone biosynthesis; menaquinol from 1,4-dihydroxy-2-naphthoate: step 2/2. In terms of biological role, methyltransferase required for the conversion of demethylmenaquinol (DMKH2) to menaquinol (MKH2). The protein is Demethylmenaquinone methyltransferase of Chlorobaculum tepidum (strain ATCC 49652 / DSM 12025 / NBRC 103806 / TLS) (Chlorobium tepidum).